The sequence spans 425 residues: Serine--tRNA ligase (425 aa).

228–230 (TAE) serves as a coordination point for L-serine. ATP is bound at residue 259 to 261 (RSE). L-serine is bound at residue Glu282. 346 to 349 (EIAS) is an ATP binding site. L-serine is bound at residue Ser382.

This sequence belongs to the class-II aminoacyl-tRNA synthetase family. Type-1 seryl-tRNA synthetase subfamily. Homodimer. The tRNA molecule binds across the dimer.

The protein localises to the cytoplasm. The catalysed reaction is tRNA(Ser) + L-serine + ATP = L-seryl-tRNA(Ser) + AMP + diphosphate + H(+). It carries out the reaction tRNA(Sec) + L-serine + ATP = L-seryl-tRNA(Sec) + AMP + diphosphate + H(+). It participates in aminoacyl-tRNA biosynthesis; selenocysteinyl-tRNA(Sec) biosynthesis; L-seryl-tRNA(Sec) from L-serine and tRNA(Sec): step 1/1. Functionally, catalyzes the attachment of serine to tRNA(Ser). Is also able to aminoacylate tRNA(Sec) with serine, to form the misacylated tRNA L-seryl-tRNA(Sec), which will be further converted into selenocysteinyl-tRNA(Sec). In Rickettsia rickettsii (strain Iowa), this protein is Serine--tRNA ligase.